The following is a 187-amino-acid chain: Serine/arginine-rich splicing factor RSZ21 (187 aa).

An RRM domain is found at 2-73 (TRVYVGNLDP…WRVELSHKDK (72 aa)). Disordered stretches follow at residues 68–89 (LSHK…IEDS) and 105–187 (RRGR…ANGV). The CCHC-type zinc-finger motif lies at 89-106 (SKCYECGELGHFARECRR). The segment covering 107 to 122 (GRGSVRRRSPSPRRRR) has biased composition (basic residues). Phosphoserine is present on residues serine 123, serine 132, serine 134, serine 140, serine 146, and serine 159. Positions 136–155 (RGRRSPPRRRSVTPPRRGRS) are enriched in basic residues. Residues 165-177 (SRRDSPRRRDSPY) show a composition bias toward basic and acidic residues. Low complexity predominate over residues 178–187 (GRRSPYANGV). Serine 181 bears the Phosphoserine mark.

The protein belongs to the splicing factor SR family. RSZ subfamily. Component of the spliceosome. Interacts with SNRNP35, AFC2, CYP59, RS2Z33 and RNU1. Interacts with MOS14. Extensively phosphorylated on serine residues in the RS domain. Phosphorylated by AFC2. In terms of tissue distribution, expressed in roots, leaves, flowers and siliques.

It localises to the nucleus speckle. Its function is as follows. Probably involved in intron recognition and spliceosome assembly. This is Serine/arginine-rich splicing factor RSZ21 (RSZ21) from Arabidopsis thaliana (Mouse-ear cress).